Consider the following 387-residue polypeptide: Erythronate-4-phosphate dehydrogenase (387 aa).

Positions 45 and 67 each coordinate substrate. An NAD(+)-binding site is contributed by Asp147. Arg208 is an active-site residue. Asp232 contributes to the NAD(+) binding site. Residue Glu237 is part of the active site. Catalysis depends on His254, which acts as the Proton donor. Gly257 provides a ligand contact to NAD(+). Position 258 (Tyr258) interacts with substrate.

The protein belongs to the D-isomer specific 2-hydroxyacid dehydrogenase family. PdxB subfamily. In terms of assembly, homodimer.

The protein localises to the cytoplasm. It catalyses the reaction 4-phospho-D-erythronate + NAD(+) = (R)-3-hydroxy-2-oxo-4-phosphooxybutanoate + NADH + H(+). It functions in the pathway cofactor biosynthesis; pyridoxine 5'-phosphate biosynthesis; pyridoxine 5'-phosphate from D-erythrose 4-phosphate: step 2/5. Functionally, catalyzes the oxidation of erythronate-4-phosphate to 3-hydroxy-2-oxo-4-phosphonooxybutanoate. This chain is Erythronate-4-phosphate dehydrogenase, found in Shewanella woodyi (strain ATCC 51908 / MS32).